The primary structure comprises 232 residues: 5'-methylthioadenosine/S-adenosylhomocysteine nucleosidase (232 aa).

Glutamate 12 serves as the catalytic Proton acceptor. Residues glycine 78, isoleucine 152, and 173 to 174 (ME) each bind substrate. Aspartate 197 acts as the Proton donor in catalysis.

It belongs to the PNP/UDP phosphorylase family. MtnN subfamily. Homodimer.

It carries out the reaction S-adenosyl-L-homocysteine + H2O = S-(5-deoxy-D-ribos-5-yl)-L-homocysteine + adenine. The enzyme catalyses S-methyl-5'-thioadenosine + H2O = 5-(methylsulfanyl)-D-ribose + adenine. It catalyses the reaction 5'-deoxyadenosine + H2O = 5-deoxy-D-ribose + adenine. Its pathway is amino-acid biosynthesis; L-methionine biosynthesis via salvage pathway; S-methyl-5-thio-alpha-D-ribose 1-phosphate from S-methyl-5'-thioadenosine (hydrolase route): step 1/2. Catalyzes the irreversible cleavage of the glycosidic bond in both 5'-methylthioadenosine (MTA) and S-adenosylhomocysteine (SAH/AdoHcy) to adenine and the corresponding thioribose, 5'-methylthioribose and S-ribosylhomocysteine, respectively. Also cleaves 5'-deoxyadenosine, a toxic by-product of radical S-adenosylmethionine (SAM) enzymes, into 5-deoxyribose and adenine. Thus, is required for in vivo function of the radical SAM enzymes biotin synthase and lipoic acid synthase, that are inhibited by 5'-deoxyadenosine accumulation. The polypeptide is 5'-methylthioadenosine/S-adenosylhomocysteine nucleosidase (Salmonella arizonae (strain ATCC BAA-731 / CDC346-86 / RSK2980)).